The chain runs to 259 residues: Dihydroorotate dehydrogenase B (NAD(+)), electron transfer subunit (259 aa).

Positions 2-102 (MQKQNMIVVN…LGPLGHGFPV (101 aa)) constitute an FAD-binding FR-type domain. FAD-binding positions include 53–56 (RPIS), 70–72 (LYR), and 77–78 (GT). [2Fe-2S] cluster is bound by residues Cys221, Cys226, Cys229, and Cys246.

The protein belongs to the PyrK family. As to quaternary structure, heterotetramer of 2 PyrK and 2 PyrD type B subunits. Requires [2Fe-2S] cluster as cofactor. It depends on FAD as a cofactor.

It functions in the pathway pyrimidine metabolism; UMP biosynthesis via de novo pathway; orotate from (S)-dihydroorotate (NAD(+) route): step 1/1. Its function is as follows. Responsible for channeling the electrons from the oxidation of dihydroorotate from the FMN redox center in the PyrD type B subunit to the ultimate electron acceptor NAD(+). The polypeptide is Dihydroorotate dehydrogenase B (NAD(+)), electron transfer subunit (Bacillus mycoides (strain KBAB4) (Bacillus weihenstephanensis)).